Reading from the N-terminus, the 316-residue chain is Transaldolase 2 (316 aa).

The active-site Schiff-base intermediate with substrate is the Lys131.

It belongs to the transaldolase family. Type 1 subfamily. As to quaternary structure, homodimer.

The protein localises to the cytoplasm. The catalysed reaction is D-sedoheptulose 7-phosphate + D-glyceraldehyde 3-phosphate = D-erythrose 4-phosphate + beta-D-fructose 6-phosphate. The protein operates within carbohydrate degradation; pentose phosphate pathway; D-glyceraldehyde 3-phosphate and beta-D-fructose 6-phosphate from D-ribose 5-phosphate and D-xylulose 5-phosphate (non-oxidative stage): step 2/3. Transaldolase is important for the balance of metabolites in the pentose-phosphate pathway. The protein is Transaldolase 2 of Shigella sonnei (strain Ss046).